The chain runs to 418 residues: CinA-like protein (418 aa).

The protein belongs to the CinA family.

This is CinA-like protein from Cyanothece sp. (strain PCC 7425 / ATCC 29141).